The primary structure comprises 41 residues: Photosystem I reaction center subunit IX (41 aa).

Residues 7-27 (YLSTAPVLLTLWMTFTAGFII) form a helical membrane-spanning segment.

This sequence belongs to the PsaJ family.

The protein resides in the plastid. The protein localises to the chloroplast thylakoid membrane. In terms of biological role, may help in the organization of the PsaE and PsaF subunits. The chain is Photosystem I reaction center subunit IX from Thalassiosira pseudonana (Marine diatom).